The following is a 476-amino-acid chain: UDP-N-acetylmuramate--L-alanine ligase (476 aa).

Residue 115–121 coordinates ATP; the sequence is GTHGKTT.

It belongs to the MurCDEF family.

Its subcellular location is the cytoplasm. The catalysed reaction is UDP-N-acetyl-alpha-D-muramate + L-alanine + ATP = UDP-N-acetyl-alpha-D-muramoyl-L-alanine + ADP + phosphate + H(+). Its pathway is cell wall biogenesis; peptidoglycan biosynthesis. Cell wall formation. The sequence is that of UDP-N-acetylmuramate--L-alanine ligase from Paramagnetospirillum magneticum (strain ATCC 700264 / AMB-1) (Magnetospirillum magneticum).